The sequence spans 291 residues: Taste receptor type 2 member 16 (291 aa).

Residue Met1 is a topological domain, extracellular. Residues 2 to 22 form a helical membrane-spanning segment; sequence IPIQLTVFFMIIYVLESLTII. Residues 23-41 lie on the Cytoplasmic side of the membrane; sequence VQSSLIVAVLGREWLQVRR. A helical transmembrane segment spans residues 42–62; the sequence is LMPVDMILISLGISRFCLQWA. Residues 63–84 lie on the Extracellular side of the membrane; sequence SMLNNFCSYFNLNYVLCNLTIT. A glycan (N-linked (GlcNAc...) asparagine) is linked at Asn80. Residues 85 to 105 form a helical membrane-spanning segment; sequence WEFFNILTFWLNSLLTVFYCI. Over 106–125 the chain is Cytoplasmic; that stretch reads KASSFTHHIFLWLRWRILRL. Residues 126 to 146 traverse the membrane as a helical segment; sequence FPWILLGSLMITCVTIIPSAI. Topologically, residues 147-182 are extracellular; it reads GNYIQIQLLTMEHLPRNSTVTDKLEKFHQYQFQAHT. Residue Asn163 is glycosylated (N-linked (GlcNAc...) asparagine). Residues 183-203 traverse the membrane as a helical segment; the sequence is VALVIPFILFLASTILLMASL. Topologically, residues 204–228 are cytoplasmic; that stretch reads TKQIQHHSTGHCNPSMKAHFTALRS. Residues 229–249 form a helical membrane-spanning segment; it reads LAVLFIVFTSYFLTILITIIG. Residues 250–257 are Extracellular-facing; sequence TLFDKRCW. A helical transmembrane segment spans residues 258 to 278; that stretch reads LWVWEAFVYAFILMHSTSLML. The Cytoplasmic segment spans residues 279–291; sequence SSPTLKRILKGKC.

This sequence belongs to the G-protein coupled receptor T2R family. Interacts with RTP3 and RTP4.

It localises to the cell membrane. Receptor that may play a role in the perception of bitterness and is gustducin-linked. May play a role in sensing the chemical composition of the gastrointestinal content. The activity of this receptor may stimulate alpha gustducin, mediate PLC-beta-2 activation and lead to the gating of TRPM5. The protein is Taste receptor type 2 member 16 (TAS2R16) of Pan paniscus (Pygmy chimpanzee).